Consider the following 182-residue polypeptide: ATP-dependent protease subunit HslV (182 aa).

Thr-12 is an active-site residue. 3 residues coordinate Na(+): Ala-167, Cys-170, and Thr-173.

Belongs to the peptidase T1B family. HslV subfamily. As to quaternary structure, a double ring-shaped homohexamer of HslV is capped on each side by a ring-shaped HslU homohexamer. The assembly of the HslU/HslV complex is dependent on binding of ATP.

It is found in the cytoplasm. It catalyses the reaction ATP-dependent cleavage of peptide bonds with broad specificity.. With respect to regulation, allosterically activated by HslU binding. In terms of biological role, protease subunit of a proteasome-like degradation complex believed to be a general protein degrading machinery. This is ATP-dependent protease subunit HslV from Chlorobium phaeovibrioides (strain DSM 265 / 1930) (Prosthecochloris vibrioformis (strain DSM 265)).